A 1785-amino-acid chain; its full sequence is Brefeldin A-inhibited guanine nucleotide-exchange protein 2 (1785 aa).

Position 1 is an N-acetylmethionine (methionine 1). The segment at 2 to 224 (QESQTKSMFV…KPQSPVIQAA (223 aa)) is DCB; DCB:DCB domain and DCB:HUS domain interaction. Phosphoserine occurs at positions 214, 218, and 227. The tract at residues 232–285 (RLKHSQAQSKPTTPEKTDLTNGEHARSDSGKVSTENGDAPRERGSSLSGTDDGA) is disordered. Position 244 is a phosphothreonine (threonine 244). Residues 244–260 (TPEKTDLTNGEHARSDS) show a composition bias toward basic and acidic residues. 3 positions are modified to phosphoserine: serine 277, serine 348, and serine 349. The interval 508–528 (ADAQCVVDIYVNYDCDLNAAN) is HUS; DCB:HUS domain interaction. The residue at position 614 (serine 614) is a Phosphoserine. The residue at position 616 (threonine 616) is a Phosphothreonine. At serine 617 the chain carries Phosphoserine. Phosphothreonine is present on threonine 626. Residues 654 to 785 (FNKKPKRGIQ…IIMLTTDLHS (132 aa)) form the SEC7 domain. A phosphoserine mark is found at serine 700, serine 1511, serine 1513, serine 1514, serine 1525, serine 1528, serine 1534, and serine 1782. Positions 1514–1532 (SIDKNPSERGQSQLSNPTD) are enriched in polar residues. Residues 1514-1535 (SIDKNPSERGQSQLSNPTDDSW) form a disordered region.

As to quaternary structure, homodimer. Interacts with ARFGEF1/BIG1; both proteins are probably part of the same or very similar macromolecular complexes. Interacts with PRKAR1A, PRKAR2A, PRKAR1B, PRKAR2B, PPP1CC, PDE3A, TNFRSF1A, MYCBP and EXOC7. Interacts with GABRB1, GABRB2 and GABRB3. In vitro phosphorylated by PKA reducing its GEF activity and dephosphorylated by phosphatase PP1. As to expression, expressed in placenta, lung, heart, brain, kidney and pancreas.

It localises to the cytoplasm. Its subcellular location is the membrane. The protein resides in the golgi apparatus. It is found in the perinuclear region. The protein localises to the trans-Golgi network. It localises to the endosome. Its subcellular location is the cytoskeleton. The protein resides in the microtubule organizing center. It is found in the centrosome. The protein localises to the cell projection. It localises to the dendrite. Its subcellular location is the cytoplasmic vesicle. The protein resides in the synapse. With respect to regulation, inhibited by brefeldin A. Its function is as follows. Promotes guanine-nucleotide exchange on ARF1 and ARF3 and to a lower extent on ARF5 and ARF6. Promotes the activation of ARF1/ARF5/ARF6 through replacement of GDP with GTP. Involved in the regulation of Golgi vesicular transport. Required for the integrity of the endosomal compartment. Involved in trafficking from the trans-Golgi network (TGN) to endosomes and is required for membrane association of the AP-1 complex and GGA1. Seems to be involved in recycling of the transferrin receptor from recycling endosomes to the plasma membrane. Probably is involved in the exit of GABA(A) receptors from the endoplasmic reticulum. Involved in constitutive release of tumor necrosis factor receptor 1 via exosome-like vesicles; the function seems to involve PKA and specifically PRKAR2B. Proposed to act as A kinase-anchoring protein (AKAP) and may mediate crosstalk between Arf and PKA pathways. This is Brefeldin A-inhibited guanine nucleotide-exchange protein 2 (ARFGEF2) from Homo sapiens (Human).